Reading from the N-terminus, the 571-residue chain is Kinesin light chain (571 aa).

Residues 54 to 160 (LLTSMKTIRK…KKHLEFMNEM (107 aa)) adopt a coiled-coil conformation. Residues 167-177 (EAQVNEEKESE) are compositionally biased toward basic and acidic residues. The tract at residues 167–210 (EAQVNEEKESEQSSLDLGFPDDDDDGGQPEVLSPTQPSAMAQAA) is disordered. TPR repeat units lie at residues 220–253 (LRTL…LEKT), 262–295 (ATML…REKT), 304–337 (AATL…REKV), 346–379 (AKQL…YQKE), 388–421 (AKTK…AHEK), and 471–504 (TTTL…RKSA). The interval 518–571 (GSDFSKGQSPKDRKRSNSRDRNRRDSMDSVSYEKSGDGDEHEKSKLHVGTSHKQ) is disordered. Basic and acidic residues-rich tracts occupy residues 526-544 (SPKD…RDSM) and 551-562 (KSGDGDEHEKSK).

Belongs to the kinesin light chain family. Oligomeric complex composed of two heavy chains and two light chains.

Its subcellular location is the cytoplasm. It is found in the cytoskeleton. In terms of biological role, kinesin is a microtubule-associated force-producing protein that may play a role in organelle transport. The light chain may function in coupling of cargo to the heavy chain or in the modulation of its ATPase activity. This is Kinesin light chain from Doryteuthis pealeii (Longfin inshore squid).